The chain runs to 221 residues: Secreted protein BARF1 (221 aa).

A signal peptide spans 1–20; the sequence is MARFIAQLLLLASCVAAGQA. 2 consecutive Ig-like domains span residues 21–120 and 124–220; these read VTAF…EHLS and PLTL…GYLS. N95 carries N-linked (GlcNAc...) asparagine; by host glycosylation. C146 and C201 are disulfide-bonded.

In terms of assembly, homohexamer. Interacts with human CSF1. Post-translationally, phosphorylated on serine and threonine by host.

It localises to the secreted. Functionally, plays diverse functions in immunomodulation and oncogenicity, maybe by acting as a functional receptor for human CSF1. May inhibit interferon secretion from mononuclear cells. Exhibits oncogenic activity in vitro. In Epstein-Barr virus (strain B95-8) (HHV-4), this protein is Secreted protein BARF1.